The chain runs to 320 residues: MKKEFGKVGVLFGGRSAEREVSLMSGKGVLAALLSKGIDAHPFDPAERSLAELAAEKFDRVFIALHGRFGEDGSLQGALEQLGIPYTGPGVMASAIAMDKVITKRVCLSHGVPTPKFTALEVEATTAEQLQAIAAEFGMPLMLKAPHEGSTIGIAKVETAEGMQAGFDLCAKYDDVVLVEQFVKGRELTVPVLGSGRNARALPIVEIIAPQGNYDYEHKYFSDDTQYLCPAPFDAAFTKRVQALAVSAFNAVGCTGWARVDFLVRESDNEPFLLEINTSPGMTGHSLVPMSAKVAGTAYEDLCVEILRMAKLGLKPVQHK.

An ATP-grasp domain is found at 104–308 (KRVCLSHGVP…YEDLCVEILR (205 aa)). 134-189 (AAEFGMPLMLKAPHEGSTIGIAKVETAEGMQAGFDLCAKYDDVVLVEQFVKGRELT) serves as a coordination point for ATP. Residues Asp-261, Glu-275, and Asn-277 each contribute to the Mg(2+) site.

Belongs to the D-alanine--D-alanine ligase family. It depends on Mg(2+) as a cofactor. Mn(2+) serves as cofactor.

The protein resides in the cytoplasm. It catalyses the reaction 2 D-alanine + ATP = D-alanyl-D-alanine + ADP + phosphate + H(+). It participates in cell wall biogenesis; peptidoglycan biosynthesis. Cell wall formation. This chain is D-alanine--D-alanine ligase, found in Janthinobacterium sp. (strain Marseille) (Minibacterium massiliensis).